Consider the following 684-residue polypeptide: Glycine--tRNA ligase beta subunit (684 aa).

It belongs to the class-II aminoacyl-tRNA synthetase family. As to quaternary structure, tetramer of two alpha and two beta subunits.

It is found in the cytoplasm. It carries out the reaction tRNA(Gly) + glycine + ATP = glycyl-tRNA(Gly) + AMP + diphosphate. This chain is Glycine--tRNA ligase beta subunit, found in Pseudomonas putida (strain ATCC 47054 / DSM 6125 / CFBP 8728 / NCIMB 11950 / KT2440).